Reading from the N-terminus, the 336-residue chain is tRNA N6-adenosine threonylcarbamoyltransferase (336 aa).

Fe cation contacts are provided by His-114 and His-118. Substrate contacts are provided by residues Leu-136–Gly-140, Asp-169, Gly-182, Asp-186, and Asn-275. Asp-301 contacts Fe cation.

This sequence belongs to the KAE1 / TsaD family. Fe(2+) serves as cofactor.

It localises to the cytoplasm. The catalysed reaction is L-threonylcarbamoyladenylate + adenosine(37) in tRNA = N(6)-L-threonylcarbamoyladenosine(37) in tRNA + AMP + H(+). Required for the formation of a threonylcarbamoyl group on adenosine at position 37 (t(6)A37) in tRNAs that read codons beginning with adenine. Is involved in the transfer of the threonylcarbamoyl moiety of threonylcarbamoyl-AMP (TC-AMP) to the N6 group of A37, together with TsaE and TsaB. TsaD likely plays a direct catalytic role in this reaction. This chain is tRNA N6-adenosine threonylcarbamoyltransferase, found in Streptococcus pneumoniae serotype 2 (strain D39 / NCTC 7466).